The primary structure comprises 186 residues: Large ribosomal subunit protein eL18B (186 aa).

Position 50 is an N6,N6,N6-trimethyllysine (K50). A Glycyl lysine isopeptide (Lys-Gly) (interchain with G-Cter in ubiquitin) cross-link involves residue K116.

This sequence belongs to the eukaryotic ribosomal protein eL18 family. In terms of assembly, component of the large ribosomal subunit (LSU). Mature yeast ribosomes consist of a small (40S) and a large (60S) subunit. The 40S small subunit contains 1 molecule of ribosomal RNA (18S rRNA) and 33 different proteins (encoded by 57 genes). The large 60S subunit contains 3 rRNA molecules (25S, 5.8S and 5S rRNA) and 46 different proteins (encoded by 81 genes). eL18 interacts with NAP1.

Its subcellular location is the cytoplasm. Its function is as follows. Component of the ribosome, a large ribonucleoprotein complex responsible for the synthesis of proteins in the cell. The small ribosomal subunit (SSU) binds messenger RNAs (mRNAs) and translates the encoded message by selecting cognate aminoacyl-transfer RNA (tRNA) molecules. The large subunit (LSU) contains the ribosomal catalytic site termed the peptidyl transferase center (PTC), which catalyzes the formation of peptide bonds, thereby polymerizing the amino acids delivered by tRNAs into a polypeptide chain. The nascent polypeptides leave the ribosome through a tunnel in the LSU and interact with protein factors that function in enzymatic processing, targeting, and the membrane insertion of nascent chains at the exit of the ribosomal tunnel. In Saccharomyces cerevisiae (strain ATCC 204508 / S288c) (Baker's yeast), this protein is Large ribosomal subunit protein eL18B.